A 507-amino-acid chain; its full sequence is Putative thymidine phosphorylase (507 aa).

This sequence belongs to the thymidine/pyrimidine-nucleoside phosphorylase family. Type 2 subfamily.

The catalysed reaction is thymidine + phosphate = 2-deoxy-alpha-D-ribose 1-phosphate + thymine. In Ralstonia nicotianae (strain ATCC BAA-1114 / GMI1000) (Ralstonia solanacearum), this protein is Putative thymidine phosphorylase.